Reading from the N-terminus, the 538-residue chain is Putative outer membrane porin BglH (538 aa).

The signal sequence occupies residues 1–25 (MFRRNLITSAILLMAPLAFSAQSLA). Positions 52 to 82 (KDEEKKKYTPATVNRSVSTNDQGYAANPFPT) are disordered. Residues 62–73 (ATVNRSVSTNDQ) show a composition bias toward polar residues.

This sequence belongs to the porin LamB (TC 1.B.3) family.

It localises to the cell outer membrane. Functionally, may be a sugar porin with a broad carbohydrate specificity. This chain is Putative outer membrane porin BglH (bglH), found in Shigella sonnei (strain Ss046).